A 285-amino-acid chain; its full sequence is ATP phosphoribosyltransferase (285 aa).

It belongs to the ATP phosphoribosyltransferase family. Long subfamily. Requires Mg(2+) as cofactor.

The protein resides in the cytoplasm. The enzyme catalyses 1-(5-phospho-beta-D-ribosyl)-ATP + diphosphate = 5-phospho-alpha-D-ribose 1-diphosphate + ATP. It functions in the pathway amino-acid biosynthesis; L-histidine biosynthesis; L-histidine from 5-phospho-alpha-D-ribose 1-diphosphate: step 1/9. Feedback inhibited by histidine. Functionally, catalyzes the condensation of ATP and 5-phosphoribose 1-diphosphate to form N'-(5'-phosphoribosyl)-ATP (PR-ATP). Has a crucial role in the pathway because the rate of histidine biosynthesis seems to be controlled primarily by regulation of HisG enzymatic activity. The chain is ATP phosphoribosyltransferase from Sulfolobus acidocaldarius (strain ATCC 33909 / DSM 639 / JCM 8929 / NBRC 15157 / NCIMB 11770).